Reading from the N-terminus, the 277-residue chain is Shikimate dehydrogenase (NADP(+)) (277 aa).

Shikimate contacts are provided by residues 18-20 and threonine 65; that span reads SKS. Catalysis depends on lysine 69, which acts as the Proton acceptor. Glutamate 81 contributes to the NADP(+) binding site. Shikimate is bound by residues asparagine 90 and aspartate 106. NADP(+) contacts are provided by residues 130-134, 154-159, and methionine 217; these read GAGGA and NRTFSK. Tyrosine 219 provides a ligand contact to shikimate. Residue glycine 241 participates in NADP(+) binding.

It belongs to the shikimate dehydrogenase family. As to quaternary structure, homodimer.

The catalysed reaction is shikimate + NADP(+) = 3-dehydroshikimate + NADPH + H(+). Its pathway is metabolic intermediate biosynthesis; chorismate biosynthesis; chorismate from D-erythrose 4-phosphate and phosphoenolpyruvate: step 4/7. Functionally, involved in the biosynthesis of the chorismate, which leads to the biosynthesis of aromatic amino acids. Catalyzes the reversible NADPH linked reduction of 3-dehydroshikimate (DHSA) to yield shikimate (SA). This chain is Shikimate dehydrogenase (NADP(+)), found in Vibrio vulnificus (strain CMCP6).